The primary structure comprises 326 residues: MGIQFQEGKQFDVIALGRACIDLNAAEYNRPMEETRSFTKYVGGSPANIAIGSAKLGLKVGFVGKIPDDQHGRFISSYMREAGVDTSQLVIDREGHKAGLTFTEILSPEECSILMYREKAADLYLSPDEIDAGYVRSAKVLLISGTALAQSPSREAALKAVSLAKAAGTKVVFELDYRPYTWSSREETSVYYTLLAGMAHIVIGTREEYDIMEGASASGNEQTAKMLFAKEPELVVIKHGVDGSYAYLPSGETFRAGVYKTNVLKTFGAGDSYASAFLYGLLRGYDIDQALRFGSASASIVVSKHSSSEAMPTLSEIKALVEEQHV.

Belongs to the carbohydrate kinase PfkB family.

The catalysed reaction is 5-dehydro-2-deoxy-D-gluconate + ATP = 6-phospho-5-dehydro-2-deoxy-D-gluconate + ADP + H(+). It participates in polyol metabolism; myo-inositol degradation into acetyl-CoA; acetyl-CoA from myo-inositol: step 5/7. Functionally, catalyzes the phosphorylation of 5-dehydro-2-deoxy-D-gluconate (2-deoxy-5-keto-D-gluconate or DKG) to 6-phospho-5-dehydro-2-deoxy-D-gluconate (DKGP). The polypeptide is 5-dehydro-2-deoxygluconokinase (Shouchella clausii (strain KSM-K16) (Alkalihalobacillus clausii)).